The primary structure comprises 281 residues: Small ribosomal subunit protein uS3 (281 aa).

The KH type-2 domain maps to Ile-38 to Lys-106. The disordered stretch occupies residues Ala-218–Ser-281. Residues Ser-238 to Arg-252 show a composition bias toward low complexity.

This sequence belongs to the universal ribosomal protein uS3 family. As to quaternary structure, part of the 30S ribosomal subunit. Forms a tight complex with proteins S10 and S14.

Functionally, binds the lower part of the 30S subunit head. Binds mRNA in the 70S ribosome, positioning it for translation. The sequence is that of Small ribosomal subunit protein uS3 from Mycobacterium leprae (strain TN).